The primary structure comprises 633 residues: 1-deoxy-D-xylulose-5-phosphate synthase (633 aa).

Residues histidine 72 and glycine 113–serine 115 each bind thiamine diphosphate. Residue aspartate 144 coordinates Mg(2+). Residues glycine 145–alanine 146, asparagine 173, tyrosine 284, and glutamate 367 each bind thiamine diphosphate. Position 173 (asparagine 173) interacts with Mg(2+).

The protein belongs to the transketolase family. DXPS subfamily. Homodimer. Mg(2+) serves as cofactor. The cofactor is thiamine diphosphate.

The catalysed reaction is D-glyceraldehyde 3-phosphate + pyruvate + H(+) = 1-deoxy-D-xylulose 5-phosphate + CO2. It participates in metabolic intermediate biosynthesis; 1-deoxy-D-xylulose 5-phosphate biosynthesis; 1-deoxy-D-xylulose 5-phosphate from D-glyceraldehyde 3-phosphate and pyruvate: step 1/1. Functionally, catalyzes the acyloin condensation reaction between C atoms 2 and 3 of pyruvate and glyceraldehyde 3-phosphate to yield 1-deoxy-D-xylulose-5-phosphate (DXP). This is 1-deoxy-D-xylulose-5-phosphate synthase from Bacillus velezensis (strain DSM 23117 / BGSC 10A6 / LMG 26770 / FZB42) (Bacillus amyloliquefaciens subsp. plantarum).